Consider the following 246-residue polypeptide: Homeobox protein SIX6 (246 aa).

Residues 128–187 (GEQKTHCFKERTRHLLREWYLQDPYPNPSKKRELAQATGLTPTQVGNWFKNRRQRDRAAA) constitute a DNA-binding region (homeobox). The tract at residues 190-246 (NRLQQQVLSQGSGRALRAEGDGTPEVLGVATSPAASLSSKAATSAISITSSDSECDI) is disordered. The span at 191–201 (RLQQQVLSQGS) shows a compositional bias: polar residues. Phosphothreonine is present on threonine 212. Low complexity predominate over residues 219-246 (ATSPAASLSSKAATSAISITSSDSECDI). Phosphoserine occurs at positions 221, 225, 227, and 228.

This sequence belongs to the SIX/Sine oculis homeobox family. As to quaternary structure, interacts with TLE4 and TLE5. In terms of tissue distribution, expressed in the developing and adult retina. Also expressed in the hypothalamic and the pituitary regions.

The protein localises to the nucleus. In terms of biological role, may be involved in eye development. The polypeptide is Homeobox protein SIX6 (SIX6) (Homo sapiens (Human)).